The sequence spans 79 residues: DNA-directed RNA polymerase subunit omega (79 aa).

The protein belongs to the RNA polymerase subunit omega family. As to quaternary structure, the RNAP catalytic core consists of 2 alpha, 1 beta, 1 beta' and 1 omega subunit. When a sigma factor is associated with the core the holoenzyme is formed, which can initiate transcription.

It catalyses the reaction RNA(n) + a ribonucleoside 5'-triphosphate = RNA(n+1) + diphosphate. In terms of biological role, promotes RNA polymerase assembly. Latches the N- and C-terminal regions of the beta' subunit thereby facilitating its interaction with the beta and alpha subunits. This chain is DNA-directed RNA polymerase subunit omega, found in Thermotoga neapolitana (strain ATCC 49049 / DSM 4359 / NBRC 107923 / NS-E).